The primary structure comprises 204 residues: Urease accessory protein UreG 1 (204 aa).

Residue Gly14–Thr21 participates in GTP binding.

This sequence belongs to the SIMIBI class G3E GTPase family. UreG subfamily. Homodimer. UreD, UreF and UreG form a complex that acts as a GTP-hydrolysis-dependent molecular chaperone, activating the urease apoprotein by helping to assemble the nickel containing metallocenter of UreC. The UreE protein probably delivers the nickel.

The protein localises to the cytoplasm. Facilitates the functional incorporation of the urease nickel metallocenter. This process requires GTP hydrolysis, probably effectuated by UreG. This Methylorubrum extorquens (strain PA1) (Methylobacterium extorquens) protein is Urease accessory protein UreG 1.